An 87-amino-acid polypeptide reads, in one-letter code: MKIILWLCVFGLFLATLFPISWQMPVESGLSSEDSASSESFASKIKRHGEGTFTSDLSKQMEEEAVRLFIEWLKNGGPSSGAPPPSG.

Positions 1–23 (MKIILWLCVFGLFLATLFPISWQ) are cleaved as a signal peptide. The propeptide occupies 24–45 (MPVESGLSSEDSASSESFASKI). Serine 86 carries the serine amide modification.

This sequence belongs to the glucagon family. In terms of tissue distribution, expressed by the venom gland.

The protein resides in the secreted. Its function is as follows. Venom protein that mimics the incretin hormone glucagon-like peptide 1 (GLP-1). It stimulates insulin synthesis and secretion, protects against beta-cell apoptosis in response to different insults, and promotes beta-cell proliferation It also promotes satiety, reduces food intake, reduces fat deposition, reduces body weight and inhibits gastric emptying. Interacts with GLP-1 receptor (GLP1R). Induces hypotension that is mediated by relaxation of cardiac smooth muscle. This chain is Exendin-4, found in Heloderma suspectum cinctum (Banded Gila monster).